A 65-amino-acid polypeptide reads, in one-letter code: Small ribosomal subunit protein eS27 (65 aa).

Zn(2+)-binding residues include Cys-21, Cys-24, Cys-40, and Cys-43. The segment at 21–43 (CRDCGNVQVVFARPSSTVTCNIC) adopts a C4-type zinc-finger fold.

The protein belongs to the eukaryotic ribosomal protein eS27 family. In terms of assembly, part of the 30S ribosomal subunit. Requires Zn(2+) as cofactor.

In Thermoplasma acidophilum (strain ATCC 25905 / DSM 1728 / JCM 9062 / NBRC 15155 / AMRC-C165), this protein is Small ribosomal subunit protein eS27.